We begin with the raw amino-acid sequence, 383 residues long: MDGIDRNPRQKLSLLLVAGRHHLSSRDLRELVEFLQNEDCGFDVSLQISDPTQQPELLELHRLVVTPSLVKLQPQPKQVFAGSSIFQQLRGWLPRWQQDEVVSGLGLSLKPTELDGSRTQRELQLEDQLLVLRQENETLIDRLQAQERLLRMVAHELRTPLTAATLAVQSQELGQIDIHRFRDVLKRRLEEIALLSKDLLEVGSTRWEALFNPQRLDLTSVAAEAILELEKLWLGRDVTIHTDIPADLPKVFADQRRMRQVLLNLLENALKYTPNGGLISLTMLHRTSQWVQVSISDSGPGIPEEEQQRIFLDRVRLPQTSAGASGFGVGLSVCRRIVEVHGGRIWVISEPEKGACFTFNVPIWQGQGQEKENVVLTEGQAEP.

In terms of domain architecture, Histidine kinase spans 152–365; it reads MVAHELRTPL…CFTFNVPIWQ (214 aa). A Phosphohistidine; by autocatalysis modification is found at H155.

As to quaternary structure, homooligomerizes. Interacts with KaiC. Participates in the KaiABC clock complex, whose core is composed of a KaiC homohexamer, 6 KaiB and up to 6 KaiA dimers. SasA and KaiB(fs) compete to bind to KaiC.

It catalyses the reaction ATP + protein L-histidine = ADP + protein N-phospho-L-histidine.. Member of the two-component regulatory system SasA/RpaA involved in genome-wide circadian gene expression. One of several clock output pathways. Participates in the Kai clock protein complex, the main circadian regulator in cyanobacteria, via its interaction with KaiC. KaiC enhances the autophosphorylation activity of SasA, which then transfers its phosphate group to RpaA to activate it. In addition to its output function, recruits fold-shifted KaiB (KaiB(fs)) to KaiC to cooperatively form the KaiB(6):KaiC(6) complex (independent of SasA kinase activity). Required for robustness of the circadian rhythm of gene expression and is involved in clock output, also required for adaptation to light/dark cycles. In Synechococcus sp. (strain CC9311), this protein is Adaptive-response sensory kinase SasA.